Reading from the N-terminus, the 182-residue chain is uncharacterized protein (182 aa).

Over residues 1–23 the composition is skewed to polar residues; it reads MILSDQNFLQTQWKEPQTAQSKN. The disordered stretch occupies residues 1 to 33; sequence MILSDQNFLQTQWKEPQTAQSKNTESKCEFHGN.

Belongs to the peptidase M24 family.

This is an uncharacterized protein from Caenorhabditis elegans.